Here is a 149-residue protein sequence, read N- to C-terminus: Transcriptional repressor NrdR (149 aa).

The segment at 3-34 (CPFCSHSETQVVETRISEDGDSIRRRRQCASC) is a zinc-finger region. Residues 49 to 139 (PAIVKKDGRR…VYRSFEDIDE (91 aa)) enclose the ATP-cone domain.

Belongs to the NrdR family. Zn(2+) serves as cofactor.

In terms of biological role, negatively regulates transcription of bacterial ribonucleotide reductase nrd genes and operons by binding to NrdR-boxes. The polypeptide is Transcriptional repressor NrdR (Albidiferax ferrireducens (strain ATCC BAA-621 / DSM 15236 / T118) (Rhodoferax ferrireducens)).